A 333-amino-acid chain; its full sequence is Homeobox protein SIX3 (333 aa).

A compositionally biased stretch (gly residues) spans Gly-57 to Ser-71. Disordered regions lie at residues Gly-57–Glu-76, Asn-233–Gly-252, and Arg-259–Val-333. The interaction with TLE5 stretch occupies residues Ala-73 to Pro-120. Residues Gly-207–Ala-266 constitute a DNA-binding region (homeobox). Residues Asn-233–Ser-235 form a bind to RHO promoter region. Residues Ser-294 to Ser-310 show a composition bias toward low complexity. The span at Thr-317 to Val-333 shows a compositional bias: polar residues.

Belongs to the SIX/Sine oculis homeobox family. Interacts with EYA4; translocates EYA4 from the cytoplasm to the nucleus and promotes activation of their target genes. Interacts with MTA1 and HDAC2; represses its own transcription. Interacts with MTA1; facilitates the binding of SIX3 to the core DNA motif of SIX3 promoter. Interacts with EYA1; promotes EYA1 translocation to the nucleus. Interacts with TLE1 and TLE5 (via Q domain); can act in combination with either TLE1 and/or TLE5 leading to transcriptional repression or activation, respectively. Interacts (via homeobox) with NR4A3; differentially regulates the transcriptional activities NR4A3. Interacts with GMNN. Interacts with TLE4. Expressed in ependymal cells during the formation of the lateral wall.

It is found in the nucleus. Transcriptional regulator which can act as both a transcriptional repressor and activator by binding a ATTA homeodomain core recognition sequence on these target genes. During forebrain development represses WNT1 expression allowing zona limitans intrathalamica formation and thereby ensuring proper anterio-posterior patterning of the diencephalon and formation of the rostral diencephalon. Acts as a direct upstream activator of SHH expression in the rostral diencephalon ventral midline and that in turn SHH maintains its expression. In addition, Six3 activity is required for the formation of the telencephalon. During postnatal stages of brain development is necessary for ependymal cell maturation by promoting the maturation of radial glia into ependymal cells through regulation of neuroblast proliferation and migration. Acts on the proliferation and differentiation of neural progenitor cells through activating transcription of CCND1 AND CCND2. During early lens formation plays a role in lens induction and specification by activating directly PAX6 in the presumptive lens ectoderm. In turn PAX6 activates SIX3 resulting in activation of PDGFRA and CCND1 promoting cell proliferation. Also is required for the neuroretina development by directly suppressing WNT8B expression in the anterior neural plate territory. Its action during retina development and lens morphogenesis is TLE5 and TLE4-dependent manner. Furthermore, during eye development regulates several genes expression. Before and during early lens development represses the CRYGF promoter by binding a SIX repressor element. Directly activates RHO transcription, or cooperates with CRX or NRL. Six3 also functions in the formation of the proximodistal axis of the optic cup, and promotes the formation of optic vesicles-like structures. During pituitary development, acts in parallel or alternatively with HESX1 to control cell proliferation through Wnt/beta-catenin pathway. Plays a role in eye development by suppressing WNT1 expression and in dorsal-ventral patterning by repressing BMP signaling pathway. The chain is Homeobox protein SIX3 (Six3) from Mus musculus (Mouse).